The sequence spans 274 residues: MKIELASSYGFCFGVKRAIKIAENAGDAATIGPLIHNNEEINRLATNFNVKTLHGINELKDEKKAIIRTHGITKSDLAELKKTDIKVIDATCPFVTKPQQICEDMSNAGYDVVIFGDENHPEVKGVKSYASGKVYVVLDESELEGVKFRQKVALVSQTTRKVEKFMQIANYLMLRVKEVRVFNTICNATFENQEAVKNLAKRADVMIVIGGKNSSNTKQLYLISKNFCEDSYLIESEHEVEKSWFEGKNLCGISAGASTPDWIIQKVVDAIEKF.

Position 12 (C12) interacts with [4Fe-4S] cluster. (2E)-4-hydroxy-3-methylbut-2-enyl diphosphate is bound by residues H36 and H70. H36 and H70 together coordinate dimethylallyl diphosphate. 2 residues coordinate isopentenyl diphosphate: H36 and H70. C92 is a binding site for [4Fe-4S] cluster. H120 is a (2E)-4-hydroxy-3-methylbut-2-enyl diphosphate binding site. H120 serves as a coordination point for dimethylallyl diphosphate. Residue H120 participates in isopentenyl diphosphate binding. The active-site Proton donor is the E122. T158 provides a ligand contact to (2E)-4-hydroxy-3-methylbut-2-enyl diphosphate. C186 lines the [4Fe-4S] cluster pocket. Positions 214, 215, 216, and 258 each coordinate (2E)-4-hydroxy-3-methylbut-2-enyl diphosphate. Positions 214, 215, 216, and 258 each coordinate dimethylallyl diphosphate. Residues S214, S215, N216, and S258 each coordinate isopentenyl diphosphate.

The protein belongs to the IspH family. It depends on [4Fe-4S] cluster as a cofactor.

It catalyses the reaction isopentenyl diphosphate + 2 oxidized [2Fe-2S]-[ferredoxin] + H2O = (2E)-4-hydroxy-3-methylbut-2-enyl diphosphate + 2 reduced [2Fe-2S]-[ferredoxin] + 2 H(+). It carries out the reaction dimethylallyl diphosphate + 2 oxidized [2Fe-2S]-[ferredoxin] + H2O = (2E)-4-hydroxy-3-methylbut-2-enyl diphosphate + 2 reduced [2Fe-2S]-[ferredoxin] + 2 H(+). Its pathway is isoprenoid biosynthesis; dimethylallyl diphosphate biosynthesis; dimethylallyl diphosphate from (2E)-4-hydroxy-3-methylbutenyl diphosphate: step 1/1. It participates in isoprenoid biosynthesis; isopentenyl diphosphate biosynthesis via DXP pathway; isopentenyl diphosphate from 1-deoxy-D-xylulose 5-phosphate: step 6/6. In terms of biological role, catalyzes the conversion of 1-hydroxy-2-methyl-2-(E)-butenyl 4-diphosphate (HMBPP) into a mixture of isopentenyl diphosphate (IPP) and dimethylallyl diphosphate (DMAPP). Acts in the terminal step of the DOXP/MEP pathway for isoprenoid precursor biosynthesis. The chain is 4-hydroxy-3-methylbut-2-enyl diphosphate reductase from Campylobacter curvus (strain 525.92).